We begin with the raw amino-acid sequence, 337 residues long: MSSVLTQPLAFHPPRPAVQPREHGRWSVDEIEALFNLPFPELMHRAQTVHRENFDPTRVEFATLLSVKTGGCAEDCGYCPQAARYDTGVEASKLMEPAEVLAAAQRAQAAGATRFCMGAAWRSPKDRDIEKVAELVRTVKALGLETCATLGMLEDGHAQTLQSAGLDYYNHNLDSAPDFYGDIITTRDYQDRLDTLARVRSAGVKVCCGGIVGMGETRRQRAGLVAELANLTPYPESVPINNLVKVEGTPLANQADLDPFEFVRTIAVARITMPTARVRLSAGRQQMGDGVQALCFLAGANSIFYGDKLLTTGNPDTEADVTLLQRLGMSRSAPDVR.

The interval 1-23 is disordered; that stretch reads MSSVLTQPLAFHPPRPAVQPREH. The 228-residue stretch at 57-284 folds into the Radical SAM core domain; it reads TRVEFATLLS…TARVRLSAGR (228 aa). Residues Cys72, Cys76, and Cys79 each coordinate [4Fe-4S] cluster. [2Fe-2S] cluster is bound by residues Cys116, Cys147, Cys207, and Arg279.

The protein belongs to the radical SAM superfamily. Biotin synthase family. In terms of assembly, homodimer. [4Fe-4S] cluster is required as a cofactor. Requires [2Fe-2S] cluster as cofactor.

It catalyses the reaction (4R,5S)-dethiobiotin + (sulfur carrier)-SH + 2 reduced [2Fe-2S]-[ferredoxin] + 2 S-adenosyl-L-methionine = (sulfur carrier)-H + biotin + 2 5'-deoxyadenosine + 2 L-methionine + 2 oxidized [2Fe-2S]-[ferredoxin]. The protein operates within cofactor biosynthesis; biotin biosynthesis; biotin from 7,8-diaminononanoate: step 2/2. In terms of biological role, catalyzes the conversion of dethiobiotin (DTB) to biotin by the insertion of a sulfur atom into dethiobiotin via a radical-based mechanism. The protein is Biotin synthase 1 of Polaromonas sp. (strain JS666 / ATCC BAA-500).